The following is a 632-amino-acid chain: tRNA-guanine(15) transglycosylase (632 aa).

The active-site Nucleophile is the aspartate 86. Substrate contacts are provided by aspartate 121 and glycine 186. Residues alanine 553–aspartate 628 form the PUA domain.

The protein belongs to the archaeosine tRNA-ribosyltransferase family. Requires Zn(2+) as cofactor.

It carries out the reaction guanosine(15) in tRNA + 7-cyano-7-deazaguanine = 7-cyano-7-carbaguanosine(15) in tRNA + guanine. It functions in the pathway tRNA modification; archaeosine-tRNA biosynthesis. Its function is as follows. Exchanges the guanine residue with 7-cyano-7-deazaguanine (preQ0) at position 15 in the dihydrouridine loop (D-loop) of archaeal tRNAs. This Thermoplasma acidophilum (strain ATCC 25905 / DSM 1728 / JCM 9062 / NBRC 15155 / AMRC-C165) protein is tRNA-guanine(15) transglycosylase.